Consider the following 432-residue polypeptide: MSAKTNPEVIKESSMVKQKEMIAGNYDRLTGTKESGEKVVSTFVPGNLNELIMCFDMVNNLPETNAIQNGMRKQSGGMIMDAEKAGHSEDVCTYVKADIGMMGRGNIAPNGKPMPAPDMLLLSYTGCFTFMKWFELLRHEYKCPTVMLQIPYQGDGKITKNMRDFVVKQLKEEVIPMFEQVSGVKFDIDRLREYLKNSAKAEDDLVWVLESAKNRPSPIDAYFGGVYYIGPMFTAFRGTADAVEYYGLLRGEIEQRIREGKGPITPEGDMKEEKYRLVVEGPPNWTSFREFWKLFYDEGAVVVASSYTKVGGLYDQGFRHDPNDPLGTLADYCLGCYTNNNLPQRVELLEKYMNEYQADGLLINSIKSCNSFSAGQLLMMREIEKRTGKPAAFIETDLVDPRYFSHANVKNRLESYFQMVDQKRSGASLATA.

This sequence belongs to the FldB/FldC dehydratase alpha/beta subunit family. Heterotetramer composed of A, B, C, and D subunits. Iron-sulfur cluster serves as cofactor. It depends on an oxidized flavin as a cofactor.

The enzyme catalyses cyclohexa-1,5-diene-1-carbonyl-CoA + oxidized 2[4Fe-4S]-[ferredoxin] + 2 ADP + 2 phosphate = reduced 2[4Fe-4S]-[ferredoxin] + benzoyl-CoA + 2 ATP + 2 H2O. The catalysed reaction is 3-hydroxybenzoyl-CoA + AH2 + 2 ATP + 2 H2O = 3-hydroxycyclohexa-1,5-diene-1-carbonyl-CoA + A + 2 ADP + 2 phosphate + 2 H(+). Its function is as follows. Catalyzes the anaerobic reduction of benzoyl-CoA and 3-hydroxybenzoyl-CoA to form cyclohexa-1,5-diene-1-carbonyl-CoA and 3-hydroxycyclohexa-1,5-diene-1-carbonyl-CoA, respectively. The enzyme also reduces other benzoyl-CoA analogs with small substituents at the aromatic ring. This is Benzoyl-CoA reductase subunit B (bcrB) from Thauera aromatica.